The sequence spans 294 residues: Cytidine deaminase (294 aa).

CMP/dCMP-type deaminase domains follow at residues 48-168 (DEDA…FGPK) and 186-294 (LTGD…TLLA). A substrate-binding site is contributed by 89–91 (NME). Histidine 102 lines the Zn(2+) pocket. Glutamate 104 acts as the Proton donor in catalysis. Positions 129 and 132 each coordinate Zn(2+).

It belongs to the cytidine and deoxycytidylate deaminase family. Homodimer. Zn(2+) serves as cofactor.

The enzyme catalyses cytidine + H2O + H(+) = uridine + NH4(+). It catalyses the reaction 2'-deoxycytidine + H2O + H(+) = 2'-deoxyuridine + NH4(+). Its function is as follows. This enzyme scavenges exogenous and endogenous cytidine and 2'-deoxycytidine for UMP synthesis. The polypeptide is Cytidine deaminase (Enterobacter sp. (strain 638)).